Reading from the N-terminus, the 216-residue chain is Peptide methionine sulfoxide reductase MsrA (216 aa).

Cys54 is an active-site residue.

It belongs to the MsrA Met sulfoxide reductase family.

It catalyses the reaction L-methionyl-[protein] + [thioredoxin]-disulfide + H2O = L-methionyl-(S)-S-oxide-[protein] + [thioredoxin]-dithiol. The enzyme catalyses [thioredoxin]-disulfide + L-methionine + H2O = L-methionine (S)-S-oxide + [thioredoxin]-dithiol. Functionally, has an important function as a repair enzyme for proteins that have been inactivated by oxidation. Catalyzes the reversible oxidation-reduction of methionine sulfoxide in proteins to methionine. The chain is Peptide methionine sulfoxide reductase MsrA from Xanthomonas campestris pv. campestris (strain 8004).